The following is a 690-amino-acid chain: ATP-dependent DNA helicase Hel308 (690 aa).

Residues Gln-26 and 45 to 52 contribute to the ATP site; that span reads IPTASGKT. The 157-residue stretch at 32 to 188 folds into the Helicase ATP-binding domain; it reads AGYLESEDNY…WLDARVVEHD (157 aa). Positions 133–136 match the DEAH box motif; it reads DEFH. The Helicase C-terminal domain occupies 208-417; sequence EKNDVVLKVL…NRDALYRQII (210 aa).

Belongs to the helicase family. Hel308 subfamily. As to quaternary structure, monomer. Binds replication protein A (RPA), in presence and absence of DNA.

It carries out the reaction Couples ATP hydrolysis with the unwinding of duplex DNA by translocating in the 3'-5' direction.. The catalysed reaction is ATP + H2O = ADP + phosphate + H(+). In terms of biological role, DNA-dependent ATPase and 3'-5' DNA helicase that may be involved in repair of stalled replication forks. Helicase with 3'-to 5'- polarity; able to unwind over 100 bp of DNA at 50 degrees Celsius. Unwinds forked DNA, preferentially on lagging strand forks; has weaker activity on Holliday junctions. Displaces the invading strand in DNA D-loops. Unwinds short oligonucleotides from dsDNA with 3'- but not blunt ends or 5'-ssDNA tails in an ATP-dependent manner. ATPase activity is stimulated by ssDNA but not dsDNA, protein binds ssDNA, dsDNA with 5'- or 3'-overhangs but not blunt ended dsDNA and replication forks. Replication forks bind both this protein and RPA. RPA does not stimulate the helicase activity of this protein. The chain is ATP-dependent DNA helicase Hel308 from Methanothermobacter thermautotrophicus (strain ATCC 29096 / DSM 1053 / JCM 10044 / NBRC 100330 / Delta H) (Methanobacterium thermoautotrophicum).